Reading from the N-terminus, the 342-residue chain is Trans-3-hydroxy-L-proline dehydratase (342 aa).

Residue serine 90 is the Proton acceptor of the active site. Residues 91–92 (GS), aspartate 251, and 256–257 (GT) each bind substrate.

Belongs to the proline racemase family.

The catalysed reaction is trans-3-hydroxy-L-proline = 1-pyrroline-2-carboxylate + H2O. In terms of biological role, catalyzes the dehydration of trans-3-hydroxy-L-proline (t3LHyp) to Delta(1)-pyrroline-2-carboxylate (Pyr2C). Is likely involved in a degradation pathway that converts t3LHyp to L-proline, which would allow P.denitrificans to grow on t3LHyp as a sole carbon source. Displays neither proline racemase activity nor 4-hydroxyproline 2-epimerase activity. The polypeptide is Trans-3-hydroxy-L-proline dehydratase (Paracoccus denitrificans (strain Pd 1222)).